Consider the following 404-residue polypeptide: Demethylphylloquinone reductase NdbB (404 aa).

FAD is bound at residue 7–43 (RICILGGGFGGLYTALRLGQLSWEGHTPPEIVLVDQR). 159-195 (IRIAIVGGGYSGVELAAKLGDRLGERGRIRIIERGKE) is an NADP(+) binding site.

Belongs to the NADH dehydrogenase family. It depends on FAD as a cofactor.

The catalysed reaction is demethylphylloquinone + NADPH + H(+) = demethylphylloquinol + NADP(+). Its pathway is cofactor biosynthesis; phylloquinone biosynthesis. With respect to regulation, inhibited by dicumarol. Functionally, bifunctional oxidoreductase probably ables to act both on prenyl naphthoquinones and on prenyl benzoquinones. Catalyzes the penultimate step in the biosynthesis of vitamin K1. This is Demethylphylloquinone reductase NdbB from Synechocystis sp. (strain ATCC 27184 / PCC 6803 / Kazusa).